The sequence spans 271 residues: ATP-dependent Clp protease proteolytic subunit 6, chloroplastic (271 aa).

Positions 1–30 are disordered; sequence MAGLAISPPLGLSFSSRTRNPKPTSFLSHN. A chloroplast-targeting transit peptide spans 1 to 77; sequence MAGLAISPPL…KAPRFGVIEA (77 aa). Positions 13-30 are enriched in polar residues; sequence SFSSRTRNPKPTSFLSHN. Ser-175 functions as the Nucleophile in the catalytic mechanism. His-200 is an active-site residue.

This sequence belongs to the peptidase S14 family. In terms of assembly, component of the chloroplastic Clp protease core complex which consist of at least 16 proteins: CLPP4 (3 copies), CLPP5 (3 copies), CLPR4 (2 copies), ClpP1 (1 copy), CLPP6 (1 copy), CLPR2 (1 copy), CLPT1 (1 copy), CLPT2 (1 copy) and 3 copies of CLPP3 and/or CLPR1 and/or CLPR3. The core complex is organized in two heptameric rings, one containing CLPP3,4,5,6 in a 1:2:3:1 ratio and the other CLPP1 and CLPR1,2,3,4 in a 3:1:1:1:1 ratio. As to expression, mostly expressed in leaves. Also detected in stems, and to a lower extent, in roots (at protein level).

The protein resides in the plastid. It localises to the chloroplast stroma. The catalysed reaction is Hydrolysis of proteins to small peptides in the presence of ATP and magnesium. alpha-casein is the usual test substrate. In the absence of ATP, only oligopeptides shorter than five residues are hydrolyzed (such as succinyl-Leu-Tyr-|-NHMec, and Leu-Tyr-Leu-|-Tyr-Trp, in which cleavage of the -Tyr-|-Leu- and -Tyr-|-Trp bonds also occurs).. Its function is as follows. Cleaves peptides in various proteins in a process that requires ATP hydrolysis. Has a chymotrypsin-like activity. Plays a major role in the degradation of misfolded proteins. Essential protein required for chloroplast development and integrity. This is ATP-dependent Clp protease proteolytic subunit 6, chloroplastic from Arabidopsis thaliana (Mouse-ear cress).